A 689-amino-acid polypeptide reads, in one-letter code: Glycine--tRNA ligase beta subunit (689 aa).

The protein belongs to the class-II aminoacyl-tRNA synthetase family. Tetramer of two alpha and two beta subunits.

It is found in the cytoplasm. The enzyme catalyses tRNA(Gly) + glycine + ATP = glycyl-tRNA(Gly) + AMP + diphosphate. In Acinetobacter baumannii (strain ACICU), this protein is Glycine--tRNA ligase beta subunit.